The chain runs to 243 residues: Vesicle-associated membrane protein-associated protein B (243 aa).

At Ala-2 the chain carries N-acetylalanine. At 2–218 the chain is on the cytoplasmic side; that stretch reads AKVEQVLSLE…AALAATGKEE (217 aa). The MSP domain occupies 7–124; it reads VLSLEPQHEL…MDSKLRCVFE (118 aa). Ser-146 is subject to Phosphoserine. A Glycyl lysine isopeptide (Lys-Gly) (interchain with G-Cter in SUMO1) cross-link involves residue Lys-147. Residues Ser-156 and Ser-159 each carry the phosphoserine modification. Residues 161-196 are a coiled coil; sequence LDDTEVKKVMEECRRLQGEVQRLREESRQLKEEDGL. Ser-206 carries the phosphoserine modification. A helical; Anchor for type IV membrane protein transmembrane segment spans residues 219–239; that stretch reads GLSARLLALVVLFFIVGVIIG.

It belongs to the VAMP-associated protein (VAP) (TC 9.B.17) family. In terms of assembly, homodimer, and heterodimer with VAPA. Interacts with VAMP1 and VAMP2. Interacts (via MSP domain) with ZFYVE27. Interacts with RMDN3. Interacts with KIF5A in a ZFYVE27-dependent manner. Interacts (via MSP domain) with STARD3 (via phospho-FFAT motif). Interacts with STARD3NL (via FFAT motif). Interacts with CERT1. Interacts with PLEKHA3 and SACM1L to form a ternary complex. Interacts with VPS13A (via FFAT motif). Interacts with RB1CC1 (via phosphorylated FFAT motif), MIGA2 (via phosphorylated FFAT motif), RMDN3 (via phosphorylated FFAT motif), OSBPL1A (via FFAT motif), KCNB1 (via phosphorylated FFAT motif) and KCNB2 (via phosphorylated FFAT motif). Interacts (via MSP domain) with WDR44 (via FFAT motif); the interactions connect the endoplasmic reticulum (ER) with the endosomal tubule.

The protein resides in the endoplasmic reticulum membrane. In terms of biological role, endoplasmic reticulum (ER)-anchored protein that mediates the formation of contact sites between the ER and endosomes via interaction with FFAT motif-containing proteins such as STARD3 or WDR44. Interacts with STARD3 in a FFAT motif phosphorylation dependent manner. Via interaction with WDR44 participates in neosynthesized protein export. Participates in the endoplasmic reticulum unfolded protein response (UPR) by inducing ERN1/IRE1 activity. Involved in cellular calcium homeostasis regulation. The chain is Vesicle-associated membrane protein-associated protein B from Mus musculus (Mouse).